We begin with the raw amino-acid sequence, 415 residues long: Polyadenylate-binding protein RBP45C (415 aa).

Positions Met-1 to Gly-77 are disordered. Positions Gln-23 to Gln-64 are enriched in low complexity. RRM domains are found at residues Arg-80–Leu-160, His-173–Asn-252, and Thr-278–Ser-350. Positions Arg-344–Thr-356 are enriched in polar residues. The disordered stretch occupies residues Arg-344–Tyr-369.

The protein belongs to the polyadenylate-binding RBP45 family. As to quaternary structure, interacts with the poly(A) tail of mRNA in nucleus. In terms of tissue distribution, mostly expressed in seedlings and stems, and, to a lower extent, in leaves and flowers.

Its subcellular location is the nucleus. Its function is as follows. Heterogeneous nuclear ribonucleoprotein (hnRNP)-protein binding the poly(A) tail of mRNA and probably involved in some steps of pre-mRNA maturation. The polypeptide is Polyadenylate-binding protein RBP45C (RBP45C) (Arabidopsis thaliana (Mouse-ear cress)).